Here is a 150-residue protein sequence, read N- to C-terminus: Cdc42 effector protein 5 (150 aa).

3 disordered regions span residues 1–20, 34–89, and 114–133; these read MPVM…DRGA, LHVG…PADP, and SETT…QHPK. A CRIB domain is found at 23 to 37; it reads ISAPLGDFRHTLHVG. An Omega-N-methylarginine modification is found at Arg38. Composition is skewed to pro residues over residues 55–66 and 74–87; these read GPPPEPGAPPVV and PAAP…PSPA. Over residues 114 to 127 the composition is skewed to basic and acidic residues; the sequence is SETTATKPDGDAHP.

The protein belongs to the BORG/CEP family. Interacts with CDC42 in a GTP-dependent manner, and with SEPT7. Highly expressed in the skeletal muscle.

The protein resides in the endomembrane system. The protein localises to the cytoplasm. It is found in the cytoskeleton. In terms of biological role, probably involved in the organization of the actin cytoskeleton. May act downstream of CDC42 to induce actin filament assembly leading to cell shape changes. Induces pseudopodia formation in fibroblasts. Inhibits MAPK8 independently of CDC42 binding. Controls septin organization and this effect is negatively regulated by CDC42. This Mus musculus (Mouse) protein is Cdc42 effector protein 5 (Cdc42ep5).